The chain runs to 379 residues: Alanine racemase (379 aa).

Lys37 (proton acceptor; specific for D-alanine) is an active-site residue. Lys37 bears the N6-(pyridoxal phosphate)lysine mark. Arg137 contributes to the substrate binding site. The Proton acceptor; specific for L-alanine role is filled by Tyr269. Met317 contributes to the substrate binding site.

It belongs to the alanine racemase family. The cofactor is pyridoxal 5'-phosphate.

The catalysed reaction is L-alanine = D-alanine. Its pathway is amino-acid biosynthesis; D-alanine biosynthesis; D-alanine from L-alanine: step 1/1. Functionally, catalyzes the interconversion of L-alanine and D-alanine. May also act on other amino acids. This chain is Alanine racemase (alr), found in Citrifermentans bemidjiense (strain ATCC BAA-1014 / DSM 16622 / JCM 12645 / Bem) (Geobacter bemidjiensis).